The chain runs to 158 residues: C-type natriuretic peptide 3 (158 aa).

Residues 1–21 (MSLNLPGYALFFILLVASSGA) form the signal peptide. The propeptide occupies 22-136 (KPAPDLQILE…SKRSRSRYKK (115 aa)). Residues 32 to 95 (PPLSSLEEQE…EVQERGRGTG (64 aa)) are disordered. Basic and acidic residues predominate over residues 47–64 (VQEKVQEQQEEVQEKVQE). Residues 65–86 (QQEEVQEQQEEVQEQQEEQQEE) are compositionally biased toward acidic residues. A disulfide bridge connects residues Cys-142 and Cys-158.

This sequence belongs to the natriuretic peptide family.

It is found in the secreted. In terms of biological role, exhibits natriuretic and vasodepressant activity. Has cGMP-stimulating activity. May help to regulate body fluid homeostasis in a variety of aquatic environments. The polypeptide is C-type natriuretic peptide 3 (Takifugu rubripes (Japanese pufferfish)).